The primary structure comprises 448 residues: N-succinylarginine dihydrolase (448 aa).

Substrate contacts are provided by residues 19–28 (AGLSSGNIAS), Asn-110, and 137–138 (HR). The active site involves Glu-174. Residue Arg-216 coordinates substrate. The active site involves His-252. Positions 254 and 366 each coordinate substrate. Cys-372 serves as the catalytic Nucleophile.

It belongs to the succinylarginine dihydrolase family. Homodimer.

It catalyses the reaction N(2)-succinyl-L-arginine + 2 H2O + 2 H(+) = N(2)-succinyl-L-ornithine + 2 NH4(+) + CO2. It participates in amino-acid degradation; L-arginine degradation via AST pathway; L-glutamate and succinate from L-arginine: step 2/5. Its function is as follows. Catalyzes the hydrolysis of N(2)-succinylarginine into N(2)-succinylornithine, ammonia and CO(2). The protein is N-succinylarginine dihydrolase of Legionella pneumophila (strain Paris).